Here is a 647-residue protein sequence, read N- to C-terminus: DNA mismatch repair protein MutL (647 aa).

The tract at residues 377-396 is disordered; that stretch reads EEPQAVKQSAQLWQPPKQEW. Residues 387–396 are compositionally biased toward low complexity; it reads QLWQPPKQEW.

This sequence belongs to the DNA mismatch repair MutL/HexB family.

This protein is involved in the repair of mismatches in DNA. It is required for dam-dependent methyl-directed DNA mismatch repair. May act as a 'molecular matchmaker', a protein that promotes the formation of a stable complex between two or more DNA-binding proteins in an ATP-dependent manner without itself being part of a final effector complex. In Bacillus cereus (strain AH187), this protein is DNA mismatch repair protein MutL.